A 78-amino-acid polypeptide reads, in one-letter code: UPF0369 protein RF_1112 (78 aa).

Belongs to the SDHAF4 family.

The sequence is that of UPF0369 protein RF_1112 from Rickettsia felis (strain ATCC VR-1525 / URRWXCal2) (Rickettsia azadi).